The following is a 774-amino-acid chain: MWIQVRTMDGKETHTVNSLSRLTKVQELRKKIEELFHVEPQLQRLFYRGKQMEDGHTLFDYDVRLNDTIQLLVRQSLALPLSTKERDSELSDSDSGYGVGHSESDKSSTHGEGTADGDDKTVWEDTDLGLYKVNEYVDVRDNIFGAWFEAQVVQVQKKALSEEEPCSSSAIMAPEDDIMYHIKYDDYPEHGVDIVKAKNVRARARTVIPWEDLEVGQVVMANYNVDYPRKRGFWYDVEICRKRQTRTARELYGNVMLLNDSQLNNCRIIFVDEVLKIELPNERSPLIGSPSRRKSGPSCQYCKDDENKPCRKCACHICGGREAPEKQVLCDECDMAFHLYCLQPPLTCVPPEPEWYCPSCRTDSSEVVQAGEKLKKSKKKAKMASATSSSRRDWGKGMACVGRTTECTIVPANHFGPIPGVPVGTMWRFRVQVSESGVHRPHVAGIHGRSNDGAYSLVLAGGYEDDVDNGNFFTYTGSGGRDLSGNKRTAGQSSDQKLTNNNRALALNCHSPINEKGAEAEDWRQGKPVRVVRNMKGGKHSKYAPAEGNRYDGIYKVVKYWPEKGKSGFIVWRYLLRRDDTEPEPWTREGKDRTRQLGLTMQYPEGYLEALANKEKNRKRPAKALEQGPSSSKIGKSKRKSTGPATTSPRVSKKSKLEPYTLPLQQANLIKEDKGNAKLWDDVLSSLQDGPYQIFLSKVKEAFQCICCQELVFRPVTTVCQHNVCKDCLDRSFRAQVFSCPACRYDLDHSSPTRVNQPLQTILNQLFPGYGSGR.

The Ubiquitin-like domain occupies Met1–Ala78. A phosphoserine mark is found at Ser76, Ser91, Ser93, Ser95, and Ser161. Residues Thr83–Lys120 form a disordered region. Tudor-like stretches follow at residues Gly129–Arg205 and Asp212–Pro280. Lys276 participates in a covalent cross-link: Glycyl lysine isopeptide (Lys-Gly) (interchain with G-Cter in SUMO2). Ser284 carries the phosphoserine modification. The segment at Arg293–Ser298 is linker. Residue Ser295 is modified to Phosphoserine; by PKA. The segment at Gly296–Asp363 adopts a PHD-type zinc-finger fold. Histone H3R2me0 binding stretches follow at residues Cys330–Asp334 and Pro350–Glu352. Residue Ser365 is modified to Phosphoserine. Lys382 participates in a covalent cross-link: Glycyl lysine isopeptide (Lys-Gly) (interchain with G-Cter in SUMO2). The tract at residues Lys382–Glu605 is methyl-CpG binding and interaction with HDAC1. Lys396 is subject to N6-acetyllysine. The YDG domain occupies Gly416–Arg578. The required to promote base flipping stretch occupies residues His442–Val443. DNA-binding positions include Ala460–Gly461 and Asp466. Required for formation of a 5-methylcytosine-binding pocket regions lie at residues Tyr463–Asp466 and Tyr475–Ser478. Ser511 bears the Phosphoserine mark. An N6-acetyllysine; alternate modification is found at Lys542. A Glycyl lysine isopeptide (Lys-Gly) (interchain with G-Cter in SUMO2); alternate cross-link involves residue Lys542. The disordered stretch occupies residues Lys616–Leu657. Ser631 is subject to Phosphoserine; by CDK1. A phosphoserine mark is found at Ser641 and Ser648. Residue Lys656 forms a Glycyl lysine isopeptide (Lys-Gly) (interchain with G-Cter in SUMO2) linkage. An RING-type zinc finger spans residues Cys705–Arg744. Position 751 is a phosphoserine (Ser751).

Interacts with DNMT3A and DNMT3B. Interacts with DNMT1; the interaction is direct. Interacts with USP7; leading to its deubiquitination. Interacts with histone H3. Interacts with HDAC1, but not with HDAC2. Interacts with BLTP3A. Interacts with PML. Interacts with EHMT2. Binds methylated CpG containing oligonucleotides. Interacts with ZNF263; recruited to the SIX3 promoter along with other proteins involved in chromatin modification and transcriptional corepression where it contributes to transcriptional repression. Interacts with UHRF2. Interacts with FANCD2. Interacts with TET1 isoform 2; this interaction induces the recruitment of TET1 isoform 2 to replicating heterochromatin. In terms of processing, phosphorylation at Ser-295 of the linker region decreases the binding to H3K9me3. Phosphorylation at Ser-631 by CDK1 during M phase impairs interaction with USP7, preventing deubiquitination and leading to degradation by the proteasome. Post-translationally, ubiquitinated; which leads to proteasomal degradation. Autoubiquitinated; interaction with USP7 leads to deubiquitination and prevents degradation. Ubiquitination and degradation takes place during M phase, when phosphorylation at Ser-631 prevents interaction with USP7 and subsequent deubiquitination. Polyubiquitination may be stimulated by DNA damage.

It localises to the nucleus. It catalyses the reaction S-ubiquitinyl-[E2 ubiquitin-conjugating enzyme]-L-cysteine + [acceptor protein]-L-lysine = [E2 ubiquitin-conjugating enzyme]-L-cysteine + N(6)-ubiquitinyl-[acceptor protein]-L-lysine.. It participates in protein modification; protein ubiquitination. Multidomain protein that acts as a key epigenetic regulator by bridging DNA methylation and chromatin modification. Specifically recognizes and binds hemimethylated DNA at replication forks via its YDG domain and recruits DNMT1 methyltransferase to ensure faithful propagation of the DNA methylation patterns through DNA replication. In addition to its role in maintenance of DNA methylation, also plays a key role in chromatin modification: through its tudor-like regions and PHD-type zinc fingers, specifically recognizes and binds histone H3 trimethylated at 'Lys-9' (H3K9me3) and unmethylated at 'Arg-2' (H3R2me0), respectively, and recruits chromatin proteins. Enriched in pericentric heterochromatin where it recruits different chromatin modifiers required for this chromatin replication. Also localizes to euchromatic regions where it negatively regulates transcription possibly by impacting DNA methylation and histone modifications. Has E3 ubiquitin-protein ligase activity by mediating the ubiquitination of target proteins such as histone H3 and PML. It is still unclear how E3 ubiquitin-protein ligase activity is related to its role in chromatin in vivo. Plays a role in DNA repair by cooperating with UHRF2 to ensure recruitment of FANCD2 to interstrand cross-links (ICLs) leading to FANCD2 activation. Plays a pivotal role in the establishment of correct spindle architecture by catalyzing the 'Lys-63'-linked ubiquitination of KIF11, thereby controlling KIF11 localization on the spindle. This Rattus norvegicus (Rat) protein is E3 ubiquitin-protein ligase UHRF1 (Uhrf1).